The chain runs to 124 residues: Small ribosomal subunit protein eS25 (124 aa).

Residues 1–22 show a composition bias toward basic and acidic residues; it reads PPKDDKKKKDAGKSAKKDKDPV. Residues 1–37 are disordered; sequence PPKDDKKKKDAGKSAKKDKDPVNKSGGKAKKKKWSKG. Basic residues predominate over residues 27–37; it reads GKAKKKKWSKG. Residue K42 is modified to N6-acetyllysine. Position 51 is an N6-acetyllysine; alternate (K51). K51 carries the post-translational modification N6-succinyllysine; alternate. N6-acetyllysine occurs at positions 59 and 65. An N6-acetyllysine; alternate modification is found at K93. An N6-succinyllysine; alternate modification is found at K93.

The protein belongs to the eukaryotic ribosomal protein eS25 family. As to quaternary structure, component of the small ribosomal subunit.

It localises to the cytoplasm. In terms of biological role, component of the small ribosomal subunit. The ribosome is a large ribonucleoprotein complex responsible for the synthesis of proteins in the cell. In Oryctolagus cuniculus (Rabbit), this protein is Small ribosomal subunit protein eS25 (RPS25).